The sequence spans 171 residues: Ribosome maturation factor RimP (171 aa).

The protein belongs to the RimP family.

Its subcellular location is the cytoplasm. Required for maturation of 30S ribosomal subunits. This is Ribosome maturation factor RimP from Oleidesulfovibrio alaskensis (strain ATCC BAA-1058 / DSM 17464 / G20) (Desulfovibrio alaskensis).